A 460-amino-acid chain; its full sequence is Argininosuccinate lyase (460 aa).

Belongs to the lyase 1 family. Argininosuccinate lyase subfamily.

It is found in the cytoplasm. The enzyme catalyses 2-(N(omega)-L-arginino)succinate = fumarate + L-arginine. It functions in the pathway amino-acid biosynthesis; L-arginine biosynthesis; L-arginine from L-ornithine and carbamoyl phosphate: step 3/3. This Campylobacter jejuni subsp. doylei (strain ATCC BAA-1458 / RM4099 / 269.97) protein is Argininosuccinate lyase.